We begin with the raw amino-acid sequence, 770 residues long: Conserved oligomeric Golgi complex subunit 7 (770 aa).

Belongs to the COG7 family. In terms of assembly, component of the conserved oligomeric Golgi complex which is composed of eight different subunits and is required for normal Golgi morphology and localization.

Its subcellular location is the golgi apparatus membrane. Its function is as follows. Required for normal Golgi function. In Mus musculus (Mouse), this protein is Conserved oligomeric Golgi complex subunit 7 (Cog7).